Reading from the N-terminus, the 250-residue chain is Small ribosomal subunit protein uS3 (250 aa).

In terms of domain architecture, KH type-2 spans 39-111 (IRTLIKNHYP…KIQINIFEVK (73 aa)).

Belongs to the universal ribosomal protein uS3 family. Part of the 30S ribosomal subunit. Forms a tight complex with proteins S10 and S14.

Its function is as follows. Binds the lower part of the 30S subunit head. Binds mRNA in the 70S ribosome, positioning it for translation. The polypeptide is Small ribosomal subunit protein uS3 (Elm witches'-broom phytoplasma).